The primary structure comprises 291 residues: Pantothenate synthetase (291 aa).

33 to 40 (MGALHEGH) contributes to the ATP binding site. H40 acts as the Proton donor in catalysis. Residue Q64 participates in (R)-pantoate binding. Residue Q64 coordinates beta-alanine. 157 to 160 (GEKD) contacts ATP. Q163 contacts (R)-pantoate. ATP contacts are provided by residues V186 and 194-197 (LSSR).

The protein belongs to the pantothenate synthetase family. In terms of assembly, homodimer.

The protein localises to the cytoplasm. The enzyme catalyses (R)-pantoate + beta-alanine + ATP = (R)-pantothenate + AMP + diphosphate + H(+). It functions in the pathway cofactor biosynthesis; (R)-pantothenate biosynthesis; (R)-pantothenate from (R)-pantoate and beta-alanine: step 1/1. In terms of biological role, catalyzes the condensation of pantoate with beta-alanine in an ATP-dependent reaction via a pantoyl-adenylate intermediate. This Rubrobacter xylanophilus (strain DSM 9941 / JCM 11954 / NBRC 16129 / PRD-1) protein is Pantothenate synthetase.